Reading from the N-terminus, the 100-residue chain is MIGLNHYLIVSGLLFCIGLAGMLKRKNILLLFFSTEIMLNAINIGFIAISKYIHNLDGQMFALFIIAIAASEVAIGLGLVILWFKKFKSLDIDSLNAMKG.

A run of 3 helical transmembrane segments spans residues 1–21 (MIGL…GLAG), 28–48 (ILLL…GFIA), and 64–84 (FIIA…ILWF).

This sequence belongs to the complex I subunit 4L family. In terms of assembly, NDH-1 is composed of 14 different subunits. Subunits NuoA, H, J, K, L, M, N constitute the membrane sector of the complex.

It localises to the cell inner membrane. It carries out the reaction a quinone + NADH + 5 H(+)(in) = a quinol + NAD(+) + 4 H(+)(out). In terms of biological role, NDH-1 shuttles electrons from NADH, via FMN and iron-sulfur (Fe-S) centers, to quinones in the respiratory chain. The immediate electron acceptor for the enzyme in this species is believed to be ubiquinone. Couples the redox reaction to proton translocation (for every two electrons transferred, four hydrogen ions are translocated across the cytoplasmic membrane), and thus conserves the redox energy in a proton gradient. This chain is NADH-quinone oxidoreductase subunit K, found in Helicobacter acinonychis (strain Sheeba).